The chain runs to 263 residues: tRNA pseudouridine synthase A (263 aa).

Aspartate 51 (nucleophile) is an active-site residue. Tyrosine 109 serves as a coordination point for substrate.

Belongs to the tRNA pseudouridine synthase TruA family. As to quaternary structure, homodimer.

The catalysed reaction is uridine(38/39/40) in tRNA = pseudouridine(38/39/40) in tRNA. Formation of pseudouridine at positions 38, 39 and 40 in the anticodon stem and loop of transfer RNAs. In Mannheimia succiniciproducens (strain KCTC 0769BP / MBEL55E), this protein is tRNA pseudouridine synthase A.